The primary structure comprises 158 residues: Small ribosomal subunit protein uS17 (158 aa).

Ala2 bears the N-acetylalanine mark. Arg22 is modified (citrulline). N6-acetyllysine occurs at positions 38, 45, and 58. Cys60 is lipidated: S-palmitoyl cysteine. Ser67 carries the phosphoserine modification. Arg69 carries the omega-N-methylarginine modification. At Ser110 the chain carries Phosphoserine.

This sequence belongs to the universal ribosomal protein uS17 family. Component of the small ribosomal subunit. Part of the small subunit (SSU) processome, composed of more than 70 proteins and the RNA chaperone small nucleolar RNA (snoRNA) U3. Citrullinated by PADI4.

It localises to the cytoplasm. The protein localises to the nucleus. The protein resides in the nucleolus. Its function is as follows. Component of the small ribosomal subunit. The ribosome is a large ribonucleoprotein complex responsible for the synthesis of proteins in the cell. Part of the small subunit (SSU) processome, first precursor of the small eukaryotic ribosomal subunit. During the assembly of the SSU processome in the nucleolus, many ribosome biogenesis factors, an RNA chaperone and ribosomal proteins associate with the nascent pre-rRNA and work in concert to generate RNA folding, modifications, rearrangements and cleavage as well as targeted degradation of pre-ribosomal RNA by the RNA exosome. This chain is Small ribosomal subunit protein uS17 (Rps11), found in Mus musculus (Mouse).